The following is a 64-amino-acid chain: Toxin BmKIT3 (64 aa).

The region spanning 1–61 is the LCN-type CS-alpha/beta domain; it reads DGYIRGSNGC…TWKSESNTCG (61 aa). 4 disulfide bridges follow: Cys10–Cys60, Cys14–Cys35, Cys21–Cys42, and Cys25–Cys44. Cys60 carries the cysteine amide modification.

The protein belongs to the long (4 C-C) scorpion toxin superfamily. Sodium channel inhibitor family. Beta subfamily. In terms of tissue distribution, expressed by the venom gland.

Its subcellular location is the secreted. In terms of biological role, depressant insect beta-toxins cause a transient contraction paralysis followed by a slow flaccid paralysis. They bind voltage-independently at site-4 of sodium channels (Nav) and shift the voltage of activation toward more negative potentials thereby affecting sodium channel activation and promoting spontaneous and repetitive firing. In Olivierus martensii (Manchurian scorpion), this protein is Toxin BmKIT3.